A 254-amino-acid chain; its full sequence is Vitamin B12 import ATP-binding protein BtuD (254 aa).

The ABC transporter domain maps to 1 to 239 (MHINHISVGN…ENLQQVFETP (239 aa)). An ATP-binding site is contributed by 29–36 (GPNGSGKS).

This sequence belongs to the ABC transporter superfamily. Vitamin B12 importer (TC 3.A.1.13.1) family. In terms of assembly, the complex is composed of two ATP-binding proteins (BtuD), two transmembrane proteins (BtuC) and a solute-binding protein (BtuF).

Its subcellular location is the cell inner membrane. The enzyme catalyses an R-cob(III)alamin(out) + ATP + H2O = an R-cob(III)alamin(in) + ADP + phosphate + H(+). Functionally, part of the ABC transporter complex BtuCDF involved in vitamin B12 import. Responsible for energy coupling to the transport system. This is Vitamin B12 import ATP-binding protein BtuD from Vibrio vulnificus (strain YJ016).